A 225-amino-acid polypeptide reads, in one-letter code: NAD(P)H-quinone oxidoreductase subunit K, chloroplastic (225 aa).

Cysteine 43, cysteine 44, cysteine 108, and cysteine 139 together coordinate [4Fe-4S] cluster.

This sequence belongs to the complex I 20 kDa subunit family. NDH is composed of at least 16 different subunits, 5 of which are encoded in the nucleus. Requires [4Fe-4S] cluster as cofactor.

It localises to the plastid. The protein localises to the chloroplast thylakoid membrane. The catalysed reaction is a plastoquinone + NADH + (n+1) H(+)(in) = a plastoquinol + NAD(+) + n H(+)(out). It carries out the reaction a plastoquinone + NADPH + (n+1) H(+)(in) = a plastoquinol + NADP(+) + n H(+)(out). In terms of biological role, NDH shuttles electrons from NAD(P)H:plastoquinone, via FMN and iron-sulfur (Fe-S) centers, to quinones in the photosynthetic chain and possibly in a chloroplast respiratory chain. The immediate electron acceptor for the enzyme in this species is believed to be plastoquinone. Couples the redox reaction to proton translocation, and thus conserves the redox energy in a proton gradient. The polypeptide is NAD(P)H-quinone oxidoreductase subunit K, chloroplastic (Helianthus annuus (Common sunflower)).